The primary structure comprises 279 residues: Large ribosomal subunit protein uL2 (279 aa).

2 disordered regions span residues 30–59 (EKSLVRPLPKKGGRNNTGRITTRHKGGGHK) and 225–279 (VMNP…KNKR). Basic residues predominate over residues 50 to 59 (TTRHKGGGHK). The span at 253–268 (PEGRTRRPNKESDKLI) shows a compositional bias: basic and acidic residues. A compositionally biased stretch (basic residues) spans 269–279 (VRRRRTGKNKR).

The protein belongs to the universal ribosomal protein uL2 family. Part of the 50S ribosomal subunit. Forms a bridge to the 30S subunit in the 70S ribosome.

In terms of biological role, one of the primary rRNA binding proteins. Required for association of the 30S and 50S subunits to form the 70S ribosome, for tRNA binding and peptide bond formation. It has been suggested to have peptidyltransferase activity; this is somewhat controversial. Makes several contacts with the 16S rRNA in the 70S ribosome. The protein is Large ribosomal subunit protein uL2 of Kocuria rhizophila (strain ATCC 9341 / DSM 348 / NBRC 103217 / DC2201).